We begin with the raw amino-acid sequence, 594 residues long: RAS guanyl-releasing protein 2-B (594 aa).

Positions 3-121 (SSDLDKGLTI…SLIDIESVPS (119 aa)) constitute an N-terminal Ras-GEF domain. The region spanning 149 to 382 (DPAELAEHLT…YQLSLQREPR (234 aa)) is the Ras-GEF domain. Positions 377-403 (LQREPRARSTQTHAKSPPSPSPPLEEW) are disordered. EF-hand domains follow at residues 418 to 453 (HIEK…FPYL) and 455 to 482 (AFNE…ASSV). Ca(2+)-binding residues include D431, D433, D435, H437, E442, D460, N462, D464, K466, and E471. Residues 490–540 (IHNFAERTFLRPVSCQHCRNLILGIYKKGLKCKACGITCHKHCRDHLSIEC) form a Phorbol-ester/DAG-type zinc finger.

This sequence belongs to the RASGRP family.

The protein localises to the cytoplasm. It is found in the cytosol. The protein resides in the cell membrane. It localises to the synapse. Its subcellular location is the synaptosome. Functions as a calcium- and DAG-regulated nucleotide exchange factor specifically activating Rap through the exchange of bound GDP for GTP. May function in cell aggregation and adhesion. This chain is RAS guanyl-releasing protein 2-B (rasgrp2-b), found in Xenopus laevis (African clawed frog).